Reading from the N-terminus, the 143-residue chain is Putative pre-16S rRNA nuclease (143 aa).

This sequence belongs to the YqgF nuclease family.

It is found in the cytoplasm. Functionally, could be a nuclease involved in processing of the 5'-end of pre-16S rRNA. The polypeptide is Putative pre-16S rRNA nuclease (Lactococcus lactis subsp. cremoris (strain SK11)).